Consider the following 188-residue polypeptide: MATYSSNDFRSGLKIIFESEPYAIESSEFVKPGKGQAFARVKMRRLLTGSRVEKTFKSTDSLEGADVVDTNMNYLYNDGEFYHFMHPETFEQHQVEEKTVGDSAKWLQDNAECIVTLWDGRPITVLPPNFIEAEITDTDPGLKGDTAGTGGKPATLSTGAVVKVPLFVQIGEVVRVDTRSGEYVSRVK.

An N6-(3,6-diaminohexanoyl)-5-hydroxylysine modification is found at Lys34.

The protein belongs to the elongation factor P family. In terms of processing, may be beta-lysylated on the epsilon-amino group of Lys-34 by the combined action of EpmA and EpmB, and then hydroxylated on the C5 position of the same residue by EpmC (if this protein is present). Lysylation is critical for the stimulatory effect of EF-P on peptide-bond formation. The lysylation moiety may extend toward the peptidyltransferase center and stabilize the terminal 3-CCA end of the tRNA. Hydroxylation of the C5 position on Lys-34 may allow additional potential stabilizing hydrogen-bond interactions with the P-tRNA.

It localises to the cytoplasm. The protein operates within protein biosynthesis; polypeptide chain elongation. Its function is as follows. Involved in peptide bond synthesis. Alleviates ribosome stalling that occurs when 3 or more consecutive Pro residues or the sequence PPG is present in a protein, possibly by augmenting the peptidyl transferase activity of the ribosome. Modification of Lys-34 is required for alleviation. This Pectobacterium atrosepticum (strain SCRI 1043 / ATCC BAA-672) (Erwinia carotovora subsp. atroseptica) protein is Elongation factor P.